A 163-amino-acid chain; its full sequence is Phosphopantetheine adenylyltransferase (163 aa).

Position 10 (Ser-10) interacts with substrate. Residues Ser-10–Phe-11 and His-18 each bind ATP. Positions 42, 74, and 88 each coordinate substrate. Residues Gly-89–Arg-91, Glu-99, and Tyr-124–Ser-130 contribute to the ATP site.

This sequence belongs to the bacterial CoaD family. In terms of assembly, homohexamer. It depends on Mg(2+) as a cofactor.

It localises to the cytoplasm. The enzyme catalyses (R)-4'-phosphopantetheine + ATP + H(+) = 3'-dephospho-CoA + diphosphate. The protein operates within cofactor biosynthesis; coenzyme A biosynthesis; CoA from (R)-pantothenate: step 4/5. In terms of biological role, reversibly transfers an adenylyl group from ATP to 4'-phosphopantetheine, yielding dephospho-CoA (dPCoA) and pyrophosphate. The chain is Phosphopantetheine adenylyltransferase from Bacillus cereus (strain G9842).